The sequence spans 71 residues: Ubiquinol-cytochrome c reductase complex assembly factor 6 (71 aa).

Residues 1-8 (MPAGVPMS) are Mitochondrial matrix-facing. The chain crosses the membrane as a helical; Signal-anchor for type II membrane protein span at residues 9–25 (TYLKMFAASLLAMCAGA). Residues 26–71 (EVVHRYYRPDLTIPEIPPKRGELKTELLGLKERKHKPQVSQQEELK) are Mitochondrial intermembrane-facing.

It belongs to the UQCC6 family. Interacts with UQCRC1. Interacts with UQCRQ. Interacts with UQCC5. Forms a complex, named COMB/coordinator of mitochondrial CYTB biogenesis, composed of UQCC1, UQCC2, UQCC4, UQCC5 and UQCC6; stabilizes nascent cytochrome b/MT-CYB and promotes its membrane insertion. Forms a complex, named COMA, composed of UQCC1, UQCC2 and UQCC4; activates MT-CYB translation. Forms a complex, named COMC, composed of UQCC1, UQCC2; UQCC3 and UQCC4; mediates MT-CYB hemylation and association with the first nuclear-encoded complex III subunit UQCRQ. Interacts with MT-CYB. Cardiac and skeletal muscle (at protein level).

The protein resides in the mitochondrion inner membrane. Required for the assembly and stability of the mitochondrial ubiquinol-cytochrome c reductase complex (complex III (CIII) or cytochrome b-c1 complex), a multisubunit transmembrane complex that is part of the mitochondrial electron transport chain (ETC) which drives oxidative phosphorylation. Mediates early complex III biogenesis. Participates in regulating the levels of electron transport chain proteins, and therefore energy supply, in response to changes in energy demand. Also required for cytochrome c oxidase complex (complex IV) assembly. This chain is Ubiquinol-cytochrome c reductase complex assembly factor 6, found in Homo sapiens (Human).